Consider the following 105-residue polypeptide: Large ribosomal subunit protein uL24 (105 aa).

Belongs to the universal ribosomal protein uL24 family. Part of the 50S ribosomal subunit.

In terms of biological role, one of two assembly initiator proteins, it binds directly to the 5'-end of the 23S rRNA, where it nucleates assembly of the 50S subunit. Its function is as follows. One of the proteins that surrounds the polypeptide exit tunnel on the outside of the subunit. This chain is Large ribosomal subunit protein uL24, found in Vibrio parahaemolyticus serotype O3:K6 (strain RIMD 2210633).